A 419-amino-acid chain; its full sequence is Pyrrolysine--tRNA ligase (419 aa).

Positions 100 to 157 are disordered; that stretch reads APKVKKAMPKSVSRAPKPLENSVSAKASTNTSRSVPSPAKSTPNSSVPASAPAPSLTR. Positions 120 to 141 are enriched in polar residues; that stretch reads NSVSAKASTNTSRSVPSPAKST. The span at 142–154 shows a compositional bias: low complexity; the sequence is PNSSVPASAPAPS.

The protein belongs to the class-II aminoacyl-tRNA synthetase family.

It localises to the cytoplasm. The catalysed reaction is tRNA(Pyl) + L-pyrrolysine + ATP = L-pyrrolysyl-tRNA(Pyl) + AMP + diphosphate. Its function is as follows. Catalyzes the attachment of pyrrolysine to tRNA(Pyl). Pyrrolysine is a lysine derivative encoded by the termination codon UAG. In Methanosarcina barkeri, this protein is Pyrrolysine--tRNA ligase (pylS).